A 181-amino-acid polypeptide reads, in one-letter code: Adenine phosphoribosyltransferase (181 aa).

It belongs to the purine/pyrimidine phosphoribosyltransferase family. Homodimer.

The protein localises to the cytoplasm. The enzyme catalyses AMP + diphosphate = 5-phospho-alpha-D-ribose 1-diphosphate + adenine. Its pathway is purine metabolism; AMP biosynthesis via salvage pathway; AMP from adenine: step 1/1. Its function is as follows. Catalyzes a salvage reaction resulting in the formation of AMP, that is energically less costly than de novo synthesis. This chain is Adenine phosphoribosyltransferase, found in Rhodopseudomonas palustris (strain BisB5).